Reading from the N-terminus, the 420-residue chain is UDP-N-acetylglucosamine 1-carboxyvinyltransferase (420 aa).

Phosphoenolpyruvate is bound at residue 22–23 (KN). Position 93 (R93) interacts with UDP-N-acetyl-alpha-D-glucosamine. The active-site Proton donor is the C117. C117 is subject to 2-(S-cysteinyl)pyruvic acid O-phosphothioketal. Positions 307 and 329 each coordinate UDP-N-acetyl-alpha-D-glucosamine.

The protein belongs to the EPSP synthase family. MurA subfamily.

The protein resides in the cytoplasm. The catalysed reaction is phosphoenolpyruvate + UDP-N-acetyl-alpha-D-glucosamine = UDP-N-acetyl-3-O-(1-carboxyvinyl)-alpha-D-glucosamine + phosphate. The protein operates within cell wall biogenesis; peptidoglycan biosynthesis. Functionally, cell wall formation. Adds enolpyruvyl to UDP-N-acetylglucosamine. This chain is UDP-N-acetylglucosamine 1-carboxyvinyltransferase, found in Alcanivorax borkumensis (strain ATCC 700651 / DSM 11573 / NCIMB 13689 / SK2).